Consider the following 401-residue polypeptide: Phosphoglycerate kinase (401 aa).

Substrate contacts are provided by residues 21 to 23 (DLN), R37, 60 to 63 (HLGR), R119, and R152. Residues K203, E325, and 351–354 (GGDT) contribute to the ATP site.

It belongs to the phosphoglycerate kinase family. Monomer.

Its subcellular location is the cytoplasm. It carries out the reaction (2R)-3-phosphoglycerate + ATP = (2R)-3-phospho-glyceroyl phosphate + ADP. It participates in carbohydrate degradation; glycolysis; pyruvate from D-glyceraldehyde 3-phosphate: step 2/5. The protein is Phosphoglycerate kinase of Acidithiobacillus ferrooxidans (strain ATCC 23270 / DSM 14882 / CIP 104768 / NCIMB 8455) (Ferrobacillus ferrooxidans (strain ATCC 23270)).